The following is a 95-amino-acid chain: Small ribosomal subunit protein uS17 (95 aa).

Belongs to the universal ribosomal protein uS17 family. As to quaternary structure, part of the 30S ribosomal subunit.

In terms of biological role, one of the primary rRNA binding proteins, it binds specifically to the 5'-end of 16S ribosomal RNA. The sequence is that of Small ribosomal subunit protein uS17 from Psychrobacter sp. (strain PRwf-1).